A 150-amino-acid polypeptide reads, in one-letter code: FAD synthase (150 aa).

Residues 20 to 21 (TF), 25 to 28 (HPGH), and Asp-103 each bind ATP.

This sequence belongs to the archaeal FAD synthase family. Homodimer. The cofactor is a divalent metal cation.

It catalyses the reaction FMN + ATP + H(+) = FAD + diphosphate. The protein operates within cofactor biosynthesis; FAD biosynthesis; FAD from FMN: step 1/1. In terms of biological role, catalyzes the transfer of the AMP portion of ATP to flavin mononucleotide (FMN) to produce flavin adenine dinucleotide (FAD) coenzyme. The sequence is that of FAD synthase from Methanohalobium evestigatum (strain ATCC BAA-1072 / DSM 3721 / NBRC 107634 / OCM 161 / Z-7303).